We begin with the raw amino-acid sequence, 901 residues long: HTH-type transcriptional regulator MalT (901 aa).

39-46 (SPAGYGKT) provides a ligand contact to ATP. One can recognise an HTH luxR-type domain in the interval 829-894 (ELIRTSPLTQ…DAVQHAQQLL (66 aa)). A DNA-binding region (H-T-H motif) is located at residues 853 to 872 (NEQIAGELAVAATTIKTHIR).

Belongs to the MalT family. In terms of assembly, monomer in solution. Oligomerizes to an active state in the presence of the positive effectors ATP and maltotriose.

With respect to regulation, activated by ATP and maltotriose, which are both required for DNA binding. Its function is as follows. Positively regulates the transcription of the maltose regulon whose gene products are responsible for uptake and catabolism of malto-oligosaccharides. Specifically binds to the promoter region of its target genes, recognizing a short DNA motif called the MalT box. This chain is HTH-type transcriptional regulator MalT, found in Salmonella gallinarum (strain 287/91 / NCTC 13346).